The following is a 468-amino-acid chain: ATP synthase subunit beta 1 (468 aa).

151-158 (GGAGVGKT) is an ATP binding site.

It belongs to the ATPase alpha/beta chains family. As to quaternary structure, F-type ATPases have 2 components, CF(1) - the catalytic core - and CF(0) - the membrane proton channel. CF(1) has five subunits: alpha(3), beta(3), gamma(1), delta(1), epsilon(1). CF(0) has three main subunits: a(1), b(2) and c(9-12). The alpha and beta chains form an alternating ring which encloses part of the gamma chain. CF(1) is attached to CF(0) by a central stalk formed by the gamma and epsilon chains, while a peripheral stalk is formed by the delta and b chains.

The protein localises to the cell inner membrane. It carries out the reaction ATP + H2O + 4 H(+)(in) = ADP + phosphate + 5 H(+)(out). Its function is as follows. Produces ATP from ADP in the presence of a proton gradient across the membrane. The catalytic sites are hosted primarily by the beta subunits. The protein is ATP synthase subunit beta 1 of Photobacterium profundum (strain SS9).